Consider the following 897-residue polypeptide: 3'-5' exonuclease DinG (897 aa).

The 154-residue stretch at 8–161 folds into the Exonuclease domain; it reads VVDLETTGNQ…DEDAATTAKL (154 aa). The 256-residue stretch at 241 to 496 folds into the Helicase ATP-binding domain; it reads SKAVDQLGLT…KAIDQLEKQR (256 aa). 276 to 283 provides a ligand contact to ATP; the sequence is ASLGSGKS. The DEAH box signature appears at 448 to 451; sequence DEAH. One can recognise a Helicase C-terminal domain in the interval 703 to 893; that stretch reads NIDEYVASIV…QFGKLLRQIQ (191 aa).

The protein belongs to the helicase family. DinG subfamily. Type 2 sub-subfamily.

In terms of biological role, 3'-5' exonuclease. In Staphylococcus aureus (strain USA300), this protein is 3'-5' exonuclease DinG.